A 68-amino-acid chain; its full sequence is uncharacterized protein (68 aa).

Transmembrane regions (helical) follow at residues 1–21 (MLFI…YFLP) and 28–48 (VHFS…LSSV).

It is found in the cell membrane. This is an uncharacterized protein from Haemophilus influenzae (strain ATCC 51907 / DSM 11121 / KW20 / Rd).